The primary structure comprises 277 residues: Shikimate dehydrogenase (NADP(+)) (277 aa).

Shikimate-binding positions include serine 18 to serine 20 and threonine 65. Lysine 69 acts as the Proton acceptor in catalysis. Position 81 (glutamate 81) interacts with NADP(+). 2 residues coordinate shikimate: asparagine 90 and aspartate 106. Residues glycine 130–alanine 134, asparagine 154–lysine 159, and methionine 217 contribute to the NADP(+) site. Residue tyrosine 219 participates in shikimate binding. Position 241 (glycine 241) interacts with NADP(+).

The protein belongs to the shikimate dehydrogenase family. Homodimer.

The enzyme catalyses shikimate + NADP(+) = 3-dehydroshikimate + NADPH + H(+). Its pathway is metabolic intermediate biosynthesis; chorismate biosynthesis; chorismate from D-erythrose 4-phosphate and phosphoenolpyruvate: step 4/7. In terms of biological role, involved in the biosynthesis of the chorismate, which leads to the biosynthesis of aromatic amino acids. Catalyzes the reversible NADPH linked reduction of 3-dehydroshikimate (DHSA) to yield shikimate (SA). The polypeptide is Shikimate dehydrogenase (NADP(+)) (Vibrio campbellii (strain ATCC BAA-1116)).